A 211-amino-acid polypeptide reads, in one-letter code: Probable GTP-binding protein EngB (211 aa).

Residues 26–200 (SGIEIAFAGR…RQKLDDWFAA (175 aa)) enclose the EngB-type G domain. Residues 34–41 (GRSNAGKS), 61–65 (GRTRL), 79–82 (DLPG), 146–149 (TKAD), and 179–181 (FSS) contribute to the GTP site. Mg(2+)-binding residues include S41 and T63.

It belongs to the TRAFAC class TrmE-Era-EngA-EngB-Septin-like GTPase superfamily. EngB GTPase family. It depends on Mg(2+) as a cofactor.

Functionally, necessary for normal cell division and for the maintenance of normal septation. This Sodalis glossinidius (strain morsitans) protein is Probable GTP-binding protein EngB.